The following is a 151-amino-acid chain: UPF0178 protein YaiI (151 aa).

This sequence belongs to the UPF0178 family.

The polypeptide is UPF0178 protein YaiI (Salmonella enteritidis PT4 (strain P125109)).